A 152-amino-acid polypeptide reads, in one-letter code: Lipoprotein signal peptidase (152 aa).

The next 2 helical transmembrane spans lie at asparagine 55–methionine 75 and leucine 85–phenylalanine 105. Active-site residues include aspartate 111 and aspartate 129. The helical transmembrane segment at valine 124–valine 144 threads the bilayer.

Belongs to the peptidase A8 family.

The protein resides in the cell membrane. The enzyme catalyses Release of signal peptides from bacterial membrane prolipoproteins. Hydrolyzes -Xaa-Yaa-Zaa-|-(S,diacylglyceryl)Cys-, in which Xaa is hydrophobic (preferably Leu), and Yaa (Ala or Ser) and Zaa (Gly or Ala) have small, neutral side chains.. It functions in the pathway protein modification; lipoprotein biosynthesis (signal peptide cleavage). This protein specifically catalyzes the removal of signal peptides from prolipoproteins. The polypeptide is Lipoprotein signal peptidase (Bacillus mycoides (strain KBAB4) (Bacillus weihenstephanensis)).